We begin with the raw amino-acid sequence, 118 residues long: Co-chaperonin GroES (118 aa).

This sequence belongs to the GroES chaperonin family. As to quaternary structure, heptamer of 7 subunits arranged in a ring. Interacts with the chaperonin GroEL.

The protein localises to the cytoplasm. Its function is as follows. Together with the chaperonin GroEL, plays an essential role in assisting protein folding. The GroEL-GroES system forms a nano-cage that allows encapsulation of the non-native substrate proteins and provides a physical environment optimized to promote and accelerate protein folding. GroES binds to the apical surface of the GroEL ring, thereby capping the opening of the GroEL channel. In Helicobacter pylori (strain P12), this protein is Co-chaperonin GroES.